The primary structure comprises 404 residues: Glucose-1-phosphate adenylyltransferase 2 (404 aa).

Residues Tyr97, Gly162, 177–178, and Ser195 each bind alpha-D-glucose 1-phosphate; that span reads EK.

The protein belongs to the bacterial/plant glucose-1-phosphate adenylyltransferase family. As to quaternary structure, homotetramer.

It catalyses the reaction alpha-D-glucose 1-phosphate + ATP + H(+) = ADP-alpha-D-glucose + diphosphate. Its pathway is glycan biosynthesis; glycogen biosynthesis. Involved in the biosynthesis of ADP-glucose, a building block required for the elongation reactions to produce glycogen. Catalyzes the reaction between ATP and alpha-D-glucose 1-phosphate (G1P) to produce pyrophosphate and ADP-Glc. This is Glucose-1-phosphate adenylyltransferase 2 from Vibrio parahaemolyticus serotype O3:K6 (strain RIMD 2210633).